The following is a 262-amino-acid chain: MQQPIVGVGHSMGGCQIATLSVTSRRIFSTMILLDPAIGPPEMGLATLGLGQLTLRRRTQWLTREDAEKALRTSFSTWDPQVLDLLIKHSIHSDKQSVEMEDGPVSLVTGRYQELVNYIKPSFIRSGKVVGQELVHQTGPVDMYHMLGLVTCSTLYLCGGESTLSTPRARELWLSRTAELSYSKDPGEMRKVDERIVPDTGHFLPMEEPKECADIIADWIDKDECMIWNCHIGKQGKIWRDLSNTNRKMNAEVWIEYLQSKL.

The short motif at 260–262 is the Peroxisomal targeting signal type 1 element; the sequence is SKL.

It belongs to the AB hydrolase superfamily. AKT2 hydrolase family.

The protein resides in the peroxisome. Its pathway is mycotoxin biosynthesis. Abhydrolase domain-containing protein; part of the gene clusters that mediate the biosynthesis of the host-selective toxins (HSTs) ACT-toxins responsible for brown spot of tangerine disease by the tangerine pathotype which affects tangerines and mandarins. ACT-toxins consist of three moieties, 9,10-epoxy-8-hydroxy-9-methyl-decatrienoic acid (EDA), valine and a polyketide. ACT-toxin I is toxic to both citrus and pear; toxin II the 5''-deoxy derivative of ACT-toxin I, is highly toxic to pear and slightly toxic to citrus. On cellular level, ACT-toxins affect plasma membrane of susceptible cells and cause a sudden increase in loss of K(+) after a few minutes of toxin treatment. The acyl-CoA ligase ACTT1, the hydrolase ACTT2, the enoyl-CoA hydratases ACTT3 and ACTT6, and the acyl-CoA synthetase ACTT5 are all involved in the biosynthesis of the AK-, AF- and ACT-toxin common 9,10-epoxy-8-hydroxy-9-methyl-decatrienoic acid (EDA) structural moiety. The exact role of each enzyme, and of additional enzymes identified within the AF-toxin clusters have still to be determined. On the other hand, ACTTS1 to ACTTS4 are specific to the tangerine pathotype. The function of ACTTS3 is to elongate the polyketide chain portion of ACT-toxin that is unique to this toxin. The enoyl-reductase ACTTS2 might complement the missing enoyl-reductase (ER) domain in ACTTS3 in the synthesis of the polyketide portion of ACT-toxin. The roles of the nonribosomal peptide synthetases-related proteins ACTTS1 and ACTTS4 have also still not been elucidated. This chain is Abhydrolase domain-containing protein ACTT2-2 (ACTT2-2), found in Alternaria alternata (Alternaria rot fungus).